The following is a 604-amino-acid chain: Ectonucleoside triphosphate diphosphohydrolase 7 (604 aa).

The Cytoplasmic portion of the chain corresponds to 1–28 (MARISFSYLCPASWYFTVPTVSPFLRQR). Residues 29 to 49 (VAFLGLFFISCLLLLMLIIDF) form a helical membrane-spanning segment. Residues 50 to 546 (RHWSASLPRD…QAHGSWFRLS (497 aa)) are Vesicular-facing. The Proton acceptor role is filled by glutamate 217. Residue asparagine 330 is glycosylated (N-linked (GlcNAc...) asparagine). Residues cysteine 448 and cysteine 477 are joined by a disulfide bond. A helical membrane pass occupies residues 547-567 (FVYNHYLFFACILVVLLAIFL). The Cytoplasmic segment spans residues 568 to 604 (YLLRLRRIHHRQTRASAPLDLLWLEEVVPMMGVQVGP).

Belongs to the GDA1/CD39 NTPase family. Requires Ca(2+) as cofactor. The cofactor is Mg(2+).

It localises to the cytoplasmic vesicle membrane. The enzyme catalyses a ribonucleoside 5'-triphosphate + H2O = a ribonucleoside 5'-diphosphate + phosphate + H(+). It carries out the reaction UTP + H2O = UDP + phosphate + H(+). The catalysed reaction is GTP + H2O = GDP + phosphate + H(+). It catalyses the reaction CTP + H2O = CDP + phosphate + H(+). Catalyzes the hydrolysis of nucleoside triphosphates and diphosphates in a calcium- or magnesium-dependent manner. Preferentially hydrolyzes nucleoside 5'-triphosphates, with substrate preference for UTP &gt; GTP &gt; CTP. Hydrolyzes ATP and nucleoside diphosphates only to a minor extent. The sequence is that of Ectonucleoside triphosphate diphosphohydrolase 7 (ENTPD7) from Homo sapiens (Human).